The sequence spans 421 residues: Lipid II:glycine glycyltransferase (421 aa).

The protein belongs to the FemABX family. Monomer.

It localises to the cytoplasm. It catalyses the reaction beta-D-GlcNAc-(1-&gt;4)-Mur2Ac(oyl-L-Ala-D-isoglutaminyl-L-Lys-D-Ala-D-Ala)-di-trans,octa-cis-undecaprenyl diphosphate + glycyl-tRNA(Gly) = beta-D-GlcNAc-(1-&gt;4)-Mur2Ac(oyl-L-Ala-D-isoglutaminyl-L-Lys-(N(6)-Gly)-D-Ala-D-Ala)-di-trans,octa-cis-undecaprenyl diphosphate + tRNA(Gly) + H(+). In terms of biological role, catalyzes the incorporation of the first glycine of the pentaglycine interpeptide bridge, which is characteristic of the S.aureus peptidoglycan. This glycine is added to the epsilon-amino group of the L-lysine of the membrane-bound lipid II intermediate (GlcNAc-(beta-1,4)-N-acetylmuramic acid(-L-Ala-D-iGln-L-Lys-D-Ala-D-Ala)-pyrophosphoryl-undecaprenol), using glycyl-tRNA(Gly) as donor, in a ribosome-independent mechanism. Involved in methicillin resistance. The chain is Lipid II:glycine glycyltransferase (femX) from Staphylococcus aureus (strain COL).